A 212-amino-acid polypeptide reads, in one-letter code: ER lumen protein-retaining receptor 2 (212 aa).

Over 1–4 (MNVF) the chain is Lumenal. A helical membrane pass occupies residues 5-24 (RLSGDLCHLAAIIILLLKIW). At 25–32 (NSRSCAGI) the chain is on the cytoplasmic side. Residues 33–52 (SGKSQLLFAMVFTTRYLDLF) traverse the membrane as a helical segment. Positions 47–48 (RY) are interaction with the K-D-E-L motif on target proteins. Residues 53–58 (TSFISL) are Lumenal-facing. A helical membrane pass occupies residues 59–79 (YNTSMKVIYMGCAYATVYLIY). Over 80–92 (MKFKATYDGNHDT) the chain is Cytoplasmic. A helical membrane pass occupies residues 93–110 (FRVEFLVVPVGGLSVLVN). Residues 111–116 (HDFSPL) are Lumenal-facing. Residues 117–135 (EILWTFSIYLESVAILPQL) traverse the membrane as a helical segment. The Cytoplasmic portion of the chain corresponds to 136-149 (FMISKTGEAETITT). A helical membrane pass occupies residues 150 to 168 (HYLFFLGLYRALYLFNWIW). The segment at 159-169 (RALYLFNWIWR) is interaction with the K-D-E-L motif on target proteins. Topologically, residues 169 to 178 (RFSFEGFFDL) are lumenal. Residues 179–199 (IAIVAGVVQTILYCDFFYLYV) form a helical membrane-spanning segment. Residues 200–212 (TKVLKGKKLSLPA) are Cytoplasmic-facing. The interval 204–207 (KGKK) is important for recycling of cargo proteins with the sequence motif K-D-E-L from the Golgi to the endoplasmic reticulum.

Belongs to the ERD2 family.

It localises to the endoplasmic reticulum membrane. It is found in the golgi apparatus membrane. Its subcellular location is the cytoplasmic vesicle. The protein localises to the COPI-coated vesicle membrane. Its function is as follows. Receptor for the C-terminal sequence motif K-D-E-L that is present on endoplasmic reticulum resident proteins and that mediates their recycling from the Golgi back to the endoplasmic reticulum. Binding is pH dependent, and is optimal at pH 5-5.4. The polypeptide is ER lumen protein-retaining receptor 2 (kdelr2) (Xenopus laevis (African clawed frog)).